An 88-amino-acid chain; its full sequence is Large ribosomal subunit protein bL27 (88 aa).

The tract at residues 1-23 is disordered; the sequence is MAHKKGTGSTRNGRDSNSKRLGV.

This sequence belongs to the bacterial ribosomal protein bL27 family.

The protein is Large ribosomal subunit protein bL27 of Synechococcus sp. (strain CC9902).